A 262-amino-acid polypeptide reads, in one-letter code: Hydroxyethylthiazole kinase (262 aa).

Met50 provides a ligand contact to substrate. Residues Arg125 and Thr171 each coordinate ATP. Substrate is bound at residue Gly198.

Belongs to the Thz kinase family. The cofactor is Mg(2+).

The enzyme catalyses 5-(2-hydroxyethyl)-4-methylthiazole + ATP = 4-methyl-5-(2-phosphooxyethyl)-thiazole + ADP + H(+). Its pathway is cofactor biosynthesis; thiamine diphosphate biosynthesis; 4-methyl-5-(2-phosphoethyl)-thiazole from 5-(2-hydroxyethyl)-4-methylthiazole: step 1/1. Catalyzes the phosphorylation of the hydroxyl group of 4-methyl-5-beta-hydroxyethylthiazole (THZ). The polypeptide is Hydroxyethylthiazole kinase (Escherichia coli O6:K15:H31 (strain 536 / UPEC)).